The sequence spans 154 residues: Large ribosomal subunit protein uL22 (154 aa).

It belongs to the universal ribosomal protein uL22 family. As to quaternary structure, part of the 50S ribosomal subunit.

In terms of biological role, this protein binds specifically to 23S rRNA. It makes multiple contacts with different domains of the 23S rRNA in the assembled 50S subunit and ribosome. The globular domain of the protein is located near the polypeptide exit tunnel on the outside of the subunit, while an extended beta-hairpin is found that lines the wall of the exit tunnel in the center of the 70S ribosome. In Methanoregula boonei (strain DSM 21154 / JCM 14090 / 6A8), this protein is Large ribosomal subunit protein uL22.